A 560-amino-acid chain; its full sequence is Dihydroxy-acid dehydratase (560 aa).

The tract at residues 1 to 20 (MGDNLKKRSSMTTDGDNRAP) is disordered. Cys-52 contributes to the [2Fe-2S] cluster binding site. Asp-84 provides a ligand contact to Mg(2+). [2Fe-2S] cluster is bound at residue Cys-125. Positions 126 and 127 each coordinate Mg(2+). Lys-127 bears the N6-carboxylysine mark. A [2Fe-2S] cluster-binding site is contributed by Cys-197. Glu-448 contacts Mg(2+). Catalysis depends on Ser-474, which acts as the Proton acceptor.

The protein belongs to the IlvD/Edd family. Homodimer. It depends on [2Fe-2S] cluster as a cofactor. Mg(2+) serves as cofactor.

It catalyses the reaction (2R)-2,3-dihydroxy-3-methylbutanoate = 3-methyl-2-oxobutanoate + H2O. The catalysed reaction is (2R,3R)-2,3-dihydroxy-3-methylpentanoate = (S)-3-methyl-2-oxopentanoate + H2O. It functions in the pathway amino-acid biosynthesis; L-isoleucine biosynthesis; L-isoleucine from 2-oxobutanoate: step 3/4. The protein operates within amino-acid biosynthesis; L-valine biosynthesis; L-valine from pyruvate: step 3/4. In terms of biological role, functions in the biosynthesis of branched-chain amino acids. Catalyzes the dehydration of (2R,3R)-2,3-dihydroxy-3-methylpentanoate (2,3-dihydroxy-3-methylvalerate) into 2-oxo-3-methylpentanoate (2-oxo-3-methylvalerate) and of (2R)-2,3-dihydroxy-3-methylbutanoate (2,3-dihydroxyisovalerate) into 2-oxo-3-methylbutanoate (2-oxoisovalerate), the penultimate precursor to L-isoleucine and L-valine, respectively. The sequence is that of Dihydroxy-acid dehydratase from Leptospira interrogans serogroup Icterohaemorrhagiae serovar Lai (strain 56601).